Reading from the N-terminus, the 100-residue chain is A-type ATP synthase subunit F (100 aa).

It belongs to the V-ATPase F subunit family. As to quaternary structure, has multiple subunits with at least A(3), B(3), C, D, E, F, H, I and proteolipid K(x).

Its subcellular location is the cell membrane. Component of the A-type ATP synthase that produces ATP from ADP in the presence of a proton gradient across the membrane. In Methanospirillum hungatei JF-1 (strain ATCC 27890 / DSM 864 / NBRC 100397 / JF-1), this protein is A-type ATP synthase subunit F.